Reading from the N-terminus, the 286-residue chain is Probable ketoamine kinase EAE_16955 (286 aa).

92–94 (EYL) contacts ATP. The Proton acceptor role is filled by Asp-194.

Belongs to the fructosamine kinase family.

Functionally, ketoamine kinase that phosphorylates ketoamines on the third carbon of the sugar moiety to generate ketoamine 3-phosphate. This Klebsiella aerogenes (strain ATCC 13048 / DSM 30053 / CCUG 1429 / JCM 1235 / KCTC 2190 / NBRC 13534 / NCIMB 10102 / NCTC 10006 / CDC 819-56) (Enterobacter aerogenes) protein is Probable ketoamine kinase EAE_16955.